The chain runs to 184 residues: TRAF-interacting protein with FHA domain-containing protein A (184 aa).

Residue T9 is modified to Phosphothreonine; by ALPK1. The region spanning 47 to 103 is the FHA domain; it reads VKFGRNSNICHYTFQDKQVSRVQFSLQLFKKFNSSVLSFEIKNMSKKTNLIVDSREL. The disordered stretch occupies residues 165 to 184; the sequence is TYSLCSSQSSSPTEMDENES. Polar residues predominate over residues 167–177; the sequence is SLCSSQSSSPT.

This sequence belongs to the TIFA family. Homooligomer; homooligomerizes following phosphorylation at Thr-9. Interacts with IRAK1, TRAF2 and TRAF6. Interacts with TIFAB; binding to TIFAB inhibits TRAF6 activation, possibly by inducing a conformational change in TIFA. Interacts with ZCCHC11; binding to ZCCHC11 suppresses the TRAF6-dependent activation of NF-kappa-B. In terms of processing, phosphorylated at Thr-9 following detection of ADP-D-glycero-beta-D-manno-heptose (ADP-Heptose) by ALPK1. Phosphorylation at Thr-9 by ALPK1 leads to the formation of an intermolecular binding between the FHA domain and phosphorylated Thr-9, promoting TIFA oligomerization and TIFA-mediated NF-kappa-B activation.

It is found in the cytoplasm. In terms of biological role, adapter molecule that plays a key role in the activation of pro-inflammatory NF-kappa-B signaling following detection of bacterial pathogen-associated molecular pattern metabolites (PAMPs). Promotes activation of an innate immune response by inducing the oligomerization and polyubiquitination of TRAF6, which leads to the activation of TAK1 and IKK through a proteasome-independent mechanism. TIFA-dependent innate immune response is triggered by ADP-D-glycero-beta-D-manno-heptose (ADP-Heptose), a potent PAMP present in all Gram-negative and some Gram-positive bacteria: ADP-Heptose is recognized by ALPK1, which phosphorylates TIFA at Thr-9, leading to TIFA homooligomerization and subsequent activation of pro-inflammatory NF-kappa-B signaling. The sequence is that of TRAF-interacting protein with FHA domain-containing protein A from Homo sapiens (Human).